A 74-amino-acid chain; its full sequence is Toxin BmKaTx17 (74 aa).

The signal sequence occupies residues 1-8 (LLMTGVES). Positions 10–72 (RDAYIAKNYN…KPIRIPGKCH (63 aa)) constitute an LCN-type CS-alpha/beta domain. Intrachain disulfides connect Cys20-Cys71, Cys24-Cys44, Cys30-Cys54, and Cys34-Cys56. Positions 73–74 (RR) are cleaved as a propeptide — removed by a carboxypeptidase.

This sequence belongs to the long (4 C-C) scorpion toxin superfamily. Sodium channel inhibitor family. Alpha subfamily. In terms of tissue distribution, expressed by the venom gland.

Its subcellular location is the secreted. Functionally, alpha toxins bind voltage-independently at site-3 of sodium channels (Nav) and inhibit the inactivation of the activated channels, thereby blocking neuronal transmission. The polypeptide is Toxin BmKaTx17 (Olivierus martensii (Manchurian scorpion)).